Consider the following 894-residue polypeptide: Disease resistance protein SUMM2 (894 aa).

Residues 31-71 (ELSKNVVAMKKDMEVLKKKRDDVKRRVDIEEFTRRRERLSQ) adopt a coiled-coil conformation. Positions 140-443 (TLATPIARIE…CEGFIDENES (304 aa)) constitute an NB-ARC domain. ATP is bound at residue 183–190 (GMGGVGKT). LRR repeat units follow at residues 517-538 (SVRRMSLMENEIEILSGSPECL), 539-561 (ELTTLFLQKNDSLLHISDEFFRC), 564-586 (MLVVLDLSGNSSLRKLPNQISKL), 588-610 (SLRYLDLSWTYIKRLPVGLQELK), 611-633 (KLRYLRLDYMKRLKSISGISNIS), 634-656 (SLRKLQLLQSKMSLDMSLVEELQ), and 660-681 (HLEVLNISIKSSLVVEKLLNAP).

The protein belongs to the disease resistance NB-LRR family. Interacts with PAT1.

Its activity is regulated as follows. Negatively regulated by the MEKK1-MKK1-MKK2-MPK4 kinase cascade. Disease resistance protein that mediates defense responses against the bacterial pathogen Pseudomonas syringae pv tomato strain DC3000, and the virulent oomycete Hyaloperonospora arabidopsidis isolate Noco2. Becomes active when the MEKK1-MKK1-MKK2-MPK4 kinase cascade is disrupted by the microbial effector hopAI1. Does not seem to be required for the activation of MPK4 by flg22, or flg22-induced up-regulation of PAD3. Functions downstream of MEKK2/SUMM1 in immune responses, including cell death and defense responses. This chain is Disease resistance protein SUMM2, found in Arabidopsis thaliana (Mouse-ear cress).